Reading from the N-terminus, the 462-residue chain is L-seryl-tRNA(Sec) selenium transferase (462 aa).

Lys-294 carries the N6-(pyridoxal phosphate)lysine modification.

Belongs to the SelA family. Homodecamer; pentamer of dimers. Binds only one seryl-tRNA(Sec) per dimer. Pyridoxal 5'-phosphate serves as cofactor.

Its subcellular location is the cytoplasm. The enzyme catalyses L-seryl-tRNA(Sec) + selenophosphate + H(+) = L-selenocysteinyl-tRNA(Sec) + phosphate. It functions in the pathway aminoacyl-tRNA biosynthesis; selenocysteinyl-tRNA(Sec) biosynthesis; selenocysteinyl-tRNA(Sec) from L-seryl-tRNA(Sec) (bacterial route): step 1/1. In terms of biological role, converts seryl-tRNA(Sec) to selenocysteinyl-tRNA(Sec) required for selenoprotein biosynthesis. In Yersinia enterocolitica serotype O:8 / biotype 1B (strain NCTC 13174 / 8081), this protein is L-seryl-tRNA(Sec) selenium transferase.